Consider the following 545-residue polypeptide: Calcium-binding mitochondrial carrier SAL1 (545 aa).

The EF-hand 1 domain maps to 11–46; that stretch reads QRDIRYACLFKELDVKGNGQVTLDNLISAFEKNDHP. Ca(2+) contacts are provided by Lys-65, Asp-70, Asp-93, Asp-95, Asp-97, Lys-99, and Glu-104. EF-hand domains follow at residues 80 to 115, 120 to 155, and 156 to 191; these read NAESQIWNGFQRIDLDHDGKIGINEINRYLSDLDNQ, NELNHELSNEKMNKFSRFFEWAFPKRKANIALRGQA, and SHKKNTDNDRSKKTTDSDLYVTYDQWRDFLLLVPRK. Ca(2+)-binding residues include Thr-161 and Ser-166. Solcar repeat units lie at residues 225 to 332, 345 to 434, and 452 to 541; these read IRGF…TKKI, LSKF…LKKW, and LSNL…LKKF. A run of 6 helical transmembrane segments spans residues 231–248, 307–326, 355–368, 409–428, 458–475, and 516–535; these read FIAGGISGVISRTCTAPF, GNGLNVIKVFPESSIKFGSF, GLAGMAAQFSVYPI, GVTVGIVGIFPYAALDLGTF, LPMGAFSGTVGASVVYPI, and GLVPTLAKVCPAVSISYLCY.

Belongs to the mitochondrial carrier (TC 2.A.29) family.

It is found in the mitochondrion inner membrane. Calcium-dependent mitochondrial solute carrier. The protein is Calcium-binding mitochondrial carrier SAL1 (SAL1) of Saccharomyces cerevisiae (Baker's yeast).